Consider the following 409-residue polypeptide: Pyrophosphate--fructose 6-phosphate 1-phosphotransferase (409 aa).

Glycine 14 lines the diphosphate pocket. Mg(2+) is bound at residue aspartate 123. Residues 151 to 153, 196 to 198, glutamate 268, and 325 to 328 contribute to the substrate site; these read TVD, MGR, and YFAR. The active-site Proton acceptor is aspartate 153.

This sequence belongs to the phosphofructokinase type A (PFKA) family. PPi-dependent PFK group II subfamily. Clade 'P' sub-subfamily. Homodimer. Requires Mg(2+) as cofactor.

Its subcellular location is the cytoplasm. It carries out the reaction beta-D-fructose 6-phosphate + diphosphate = beta-D-fructose 1,6-bisphosphate + phosphate + H(+). It participates in carbohydrate degradation; glycolysis; D-glyceraldehyde 3-phosphate and glycerone phosphate from D-glucose: step 3/4. With respect to regulation, non-allosteric. Functionally, catalyzes the phosphorylation of D-fructose 6-phosphate, the first committing step of glycolysis. Uses inorganic phosphate (PPi) as phosphoryl donor instead of ATP like common ATP-dependent phosphofructokinases (ATP-PFKs), which renders the reaction reversible, and can thus function both in glycolysis and gluconeogenesis. Consistently, PPi-PFK can replace the enzymes of both the forward (ATP-PFK) and reverse (fructose-bisphosphatase (FBPase)) reactions. This is Pyrophosphate--fructose 6-phosphate 1-phosphotransferase from Methylomonas methanica.